The sequence spans 684 residues: Coiled-coil domain-containing protein 62 (684 aa).

Coiled-coil stretches lie at residues 11–160 (RQNI…QALT) and 199–322 (TCIV…ESKA). The interval 579–603 (SLGSSKSALREDETESSSNKKNSPT) is disordered. Positions 594–603 (SSSNKKNSPT) are enriched in polar residues. 2 consecutive short sequence motifs (LXXLL motif) follow at residues 634-638 (LQRLL) and 650-654 (LSTLL). The segment at 657 to 684 (SHENLTGSATNKSEVPEESAQKNTFVSY) is disordered. Positions 659 to 669 (ENLTGSATNKS) are enriched in polar residues.

As to quaternary structure, interacts with ESR1 and ESR2 in the presence of estradiol/E2. The interaction with ESR2 recruits CCDC62 to ER target genes, including cyclin-D1/CCND1 AP-1 promoter. Interacts with GOPC. Highly expressed in adult testis. Expressed in both prostate epithelial and stromal cells, with predominant expression in epithelial cells (at protein level). Not detected in prostate by RT-PCR. Overexpressed in various cancers.

It is found in the cytoplasm. The protein resides in the nucleus. The protein localises to the cytoplasmic vesicle. It localises to the secretory vesicle. Its subcellular location is the acrosome. Functionally, nuclear receptor coactivator that can enhance preferentially estrogen receptors ESR1 and ESR2 transactivation. Also modulates progesterone/PGR, glucocorticoid/NR3C1 and androgen/AR receptors transactivation, although at lower level; little effect on vitamin D receptor/VDR. Required for normal spermiogenesis. It probably plays a role in acrosome formation. The protein is Coiled-coil domain-containing protein 62 (CCDC62) of Homo sapiens (Human).